The chain runs to 554 residues: Glucose-6-phosphate isomerase 2 (554 aa).

E359 (proton donor) is an active-site residue. Active-site residues include H390 and K518.

This sequence belongs to the GPI family.

It is found in the cytoplasm. The enzyme catalyses alpha-D-glucose 6-phosphate = beta-D-fructose 6-phosphate. Its pathway is carbohydrate biosynthesis; gluconeogenesis. It functions in the pathway carbohydrate degradation; glycolysis; D-glyceraldehyde 3-phosphate and glycerone phosphate from D-glucose: step 2/4. Its function is as follows. Catalyzes the reversible isomerization of glucose-6-phosphate to fructose-6-phosphate. This Pseudomonas putida (strain ATCC 47054 / DSM 6125 / CFBP 8728 / NCIMB 11950 / KT2440) protein is Glucose-6-phosphate isomerase 2.